Here is a 558-residue protein sequence, read N- to C-terminus: MLATLRLFLFFLPFFHLHTFADDCPDWAAARASSEVVALQQQIDRWDDAYHREGRSVIADELYDQSRLRLNQWRQCFNLPSPPEPLRTASGPVAHPVAHTGLDKLHDAADIATWLRDRQNVWVQPKVDGVAVTLIYRDGRLHQAISRGDGVRGQDWTASAKKIGAIPQQLTQPQDLLVQGELYWRLNGHMQARAGSANARATVAGLLGRKDLGAEHAAGIGLFVWDWPHGPRDLPERITALTQFGFPTTVPYTQAVASLNDAQHWRDHWYHSPLPFATDGVVLRQSLRPPAERWQARPPYWAVAWKYPFAQALADVRKVHFKIGRTGRITPVLELSPVMLDDRQIKRVSVSSLRRWQELDIRPGDQVAISLAGLTIPRLDSVVLRSTERADLNVPLASDFHALSCWQPTPGCESQFLARLTWLSGKQGLALPHVGRGTWEKLLETGRLNSLLDWLTLDGPELANIAGLGERSSARLLHSFHSARQRPFAQWLKALGLPPTGQATLADSWQALAQRNTEQWQAEAGIGPGRAAQLSAFFRDPQVLTLSETLQAAGVDGF.

Residue lysine 126 is the N6-AMP-lysine intermediate of the active site.

The protein belongs to the NAD-dependent DNA ligase family. LigB subfamily.

It carries out the reaction NAD(+) + (deoxyribonucleotide)n-3'-hydroxyl + 5'-phospho-(deoxyribonucleotide)m = (deoxyribonucleotide)n+m + AMP + beta-nicotinamide D-nucleotide.. Catalyzes the formation of phosphodiester linkages between 5'-phosphoryl and 3'-hydroxyl groups in double-stranded DNA using NAD as a coenzyme and as the energy source for the reaction. The polypeptide is DNA ligase B (Pseudomonas fluorescens (strain Pf0-1)).